The primary structure comprises 178 residues: Large ribosomal subunit protein uL6 (178 aa).

The protein belongs to the universal ribosomal protein uL6 family. Part of the 50S ribosomal subunit.

Functionally, this protein binds to the 23S rRNA, and is important in its secondary structure. It is located near the subunit interface in the base of the L7/L12 stalk, and near the tRNA binding site of the peptidyltransferase center. The polypeptide is Large ribosomal subunit protein uL6 (Streptococcus agalactiae serotype Ia (strain ATCC 27591 / A909 / CDC SS700)).